The sequence spans 116 residues: Large ribosomal subunit protein uL18 (116 aa).

The protein belongs to the universal ribosomal protein uL18 family. As to quaternary structure, part of the 50S ribosomal subunit; part of the 5S rRNA/L5/L18/L25 subcomplex. Contacts the 5S and 23S rRNAs.

Its function is as follows. This is one of the proteins that bind and probably mediate the attachment of the 5S RNA into the large ribosomal subunit, where it forms part of the central protuberance. This is Large ribosomal subunit protein uL18 from Azotobacter vinelandii (strain DJ / ATCC BAA-1303).